Reading from the N-terminus, the 68-residue chain is Protein SlyX homolog (68 aa).

Belongs to the SlyX family.

This Pseudomonas putida (strain GB-1) protein is Protein SlyX homolog.